A 179-amino-acid polypeptide reads, in one-letter code: Trypsin inhibitor (179 aa).

Q1 carries the pyrrolidone carboxylic acid modification. Intrachain disulfides connect C40–C85 and C132–C143.

It belongs to the protease inhibitor I3 (leguminous Kunitz-type inhibitor) family. In terms of assembly, heterodimer of an alpha and a beta chain linked by a disulfide bond. Abundant in dry seeds.

The protein localises to the secreted. Inhibits trypsin, plasmin, human plasma kallikrein, chymotrypsin and factor XIIa activity. The protein is Trypsin inhibitor of Leucaena leucocephala (White popinac).